Reading from the N-terminus, the 238-residue chain is Tyrosine recombinase XerD-like (238 aa).

The Core-binding (CB) domain occupies 1–75 (MKLPNEIEEY…SANQYFLFLY (75 aa)). The 149-residue stretch at 90-238 (VQKKTQSSES…TITALEKYYR (149 aa)) folds into the Tyr recombinase domain. Catalysis depends on residues K154 and R204. Y236 acts as the O-(3'-phospho-DNA)-tyrosine intermediate in catalysis.

Belongs to the 'phage' integrase family. XerD-like subfamily.

Its subcellular location is the cytoplasm. Functionally, putative tyrosine recombinase. Not involved in the cutting and rejoining of the recombining DNA molecules on dif(SL) site. In Lactococcus lactis subsp. cremoris (strain SK11), this protein is Tyrosine recombinase XerD-like.